The sequence spans 739 residues: Catalase-peroxidase 1 (739 aa).

The segment at 1 to 33 (MPEDRPIEDSPPIGEAQTDAPAGGCPAGFGRIK) is disordered. Residues 113 to 236 (WHAAGTYRVS…LAAVQMGLIY (124 aa)) constitute a cross-link (tryptophyl-tyrosyl-methioninium (Trp-Tyr) (with M-262)). His-114 acts as the Proton acceptor in catalysis. The segment at residues 236–262 (YVNPEGPNGNPDPQASAIDIRETFGRM) is a cross-link (tryptophyl-tyrosyl-methioninium (Tyr-Met) (with W-113)). His-277 contacts heme b.

The protein belongs to the peroxidase family. Peroxidase/catalase subfamily. In terms of assembly, homodimer or homotetramer. Heme b serves as cofactor. Formation of the three residue Trp-Tyr-Met cross-link is important for the catalase, but not the peroxidase activity of the enzyme.

It carries out the reaction H2O2 + AH2 = A + 2 H2O. It catalyses the reaction 2 H2O2 = O2 + 2 H2O. In terms of biological role, bifunctional enzyme with both catalase and broad-spectrum peroxidase activity. May play a role in the intracellular survival of mycobacteria. In Mycolicibacterium smegmatis (strain ATCC 700084 / mc(2)155) (Mycobacterium smegmatis), this protein is Catalase-peroxidase 1.